Consider the following 570-residue polypeptide: Structure-specific endonuclease subunit EME1 (570 aa).

A compositionally biased stretch (low complexity) spans 1–12 (MALKKSSPSLDS). Residues 1–42 (MALKKSSPSLDSGDSDSEELPTFAFLKKEPSSTKRRQPEREE) are disordered. Phosphoserine is present on residues serine 12 and serine 15. The segment covering 26–42 (LKKEPSSTKRRQPEREE) has biased composition (basic and acidic residues). Residues serine 84, serine 85, and serine 87 each carry the phosphoserine modification. Lysine 103 participates in a covalent cross-link: Glycyl lysine isopeptide (Lys-Gly) (interchain with G-Cter in SUMO2). Residues serine 111 and serine 117 each carry the phosphoserine modification. Residues lysine 136 and lysine 141 each participate in a glycyl lysine isopeptide (Lys-Gly) (interchain with G-Cter in SUMO2) cross-link. At threonine 150 the chain carries Phosphothreonine. Disordered stretches follow at residues 187 to 233 (KTNS…ERKN) and 372 to 400 (AQNP…ASIG). Positions 220–233 (RQKESTLRRQERKN) are enriched in basic and acidic residues. Positions 250–456 (KHIIVVLDPV…PFKKLRDETT (207 aa)) are nuclease-like domain; forms the post-nick DNA binding interface and is involved in DNA recognition and bending. A helix-hairpin-helix (2HhH); forms the pre-nick DNA binding interface and is involved in DNA recognition and bending region spans residues 476–570 (RGLALVWRRQ…QPHLSLDSAD (95 aa)).

The protein belongs to the EME1/MMS4 family. Part of the heterodimeric MUS81-EME1 complex.

The protein localises to the nucleus. The protein resides in the nucleolus. Non-catalytic subunit of the structure-specific, heterodimeric DNA endonuclease MUS81-EME1 which is involved in the maintenance of genome stability. In the complex, EME1 is required for DNA cleavage, participating in DNA recognition and bending. MUS81-EME1 cleaves 3'-flaps and nicked Holliday junctions, and exhibit limited endonuclease activity with 5' flaps and nicked double-stranded DNAs. Active during prometaphase, MUS81-EME1 resolves mitotic recombination intermediates, including Holliday junctions, which form during homologous recombination. This Homo sapiens (Human) protein is Structure-specific endonuclease subunit EME1.